Here is a 460-residue protein sequence, read N- to C-terminus: Baeyer-Villiger oxidase AgnL3 (460 aa).

Belongs to the questin oxidase family. The cofactor is NADPH.

It functions in the pathway secondary metabolite biosynthesis. In terms of biological role, baeyer-Villiger oxidase; part of the gene cluster that mediates the biosynthesis of agnestins, dihydroxy-xanthone metabolites. The pathway begins with the assembly and cyclization of atrochrysone thioester by the non-reducing polyketide synthase Agnpks1. The atrochrysone carboxyl ACP thioesterase AgnL7 then breaks the thioester bond and releases the atrochrysone carboxylic acid as the first enzyme-free intermediate. The decarboxylase AgnL1 then catalyzes the concerted decarboxylation-elimination required to convert atochrysone carboxylic acid into emodin anthrone, which is further oxidized to emodin by the anthrone oxygenase AgnL2. Emodin then undergoes reduction catalyzed by the oxidoreductase AgnL4 to yield the dihydroquinone tautomer which is the substrate for reduction by the short chain dehydrogenase AgnL6 reduction to produce hydroxyketone, followed by AgnL8 dehydration and likely spontaneous autoxidation to chrysophanol. Baeyer-Villiger oxidation by the oxidase AgnL3 leads to monodictyphenone via cleavage of the C-10/C-10a bond of chrysophanol. Alternative cleavage at the C-4a/C-10 bond of chrysophanol also leads to the formation some cephalone F. Further conversion to agnestins A and B, requires reduction to dihydro-monodictyphenone, oxidation to agnestin C probably via an epoxide, and rearrangement to either agnestin A or agnestin B directly, although agnestin A or agnestin B can also interconvert. Within the cluster, AgnR1 is the only unassigned oxidoreductase present which could be involved in this conversion. However, AgnR1 seems not to be involved in this step, and thus genes involved in the proposed oxidation/reduction may be located elsewhere on the genome. Further agnestin A derivatives are probably formed by spontaneous decarboxylations, dehydrations and methanolysis reactions. The sequence is that of Baeyer-Villiger oxidase AgnL3 from Paecilomyces divaricatus (Penicillium divaricatum).